The following is a 149-amino-acid chain: 2S seed storage albumin protein (149 aa).

An N-terminal signal peptide occupies residues 1–22; it reads MKLFIILATATLLIAATQATYP. 4 disulfide bridges follow: C38/C98, C52/C87, C88/C133, and C100/C140. The igE-binding stretch occupies residues 121 to 128; sequence EGVRDLKE.

It belongs to the 2S seed storage albumins family. As to expression, expressed in seeds (at protein level).

In terms of biological role, seed storage protein. This Fagopyrum esculentum (Common buckwheat) protein is 2S seed storage albumin protein.